Reading from the N-terminus, the 163-residue chain is uncharacterized protein (163 aa).

This is an uncharacterized protein from Dictyostelium discoideum (Social amoeba).